A 567-amino-acid chain; its full sequence is Urease subunit alpha (567 aa).

Positions 129–567 (GGVDTHIHWI…LPMAQRYFLF (439 aa)) constitute a Urease domain. Positions 134, 136, and 217 each coordinate Ni(2+). Lysine 217 bears the N6-carboxylysine mark. Histidine 219 contacts substrate. Ni(2+) is bound by residues histidine 246 and histidine 272. Catalysis depends on histidine 320, which acts as the Proton donor. Ni(2+) is bound at residue aspartate 360.

It belongs to the metallo-dependent hydrolases superfamily. Urease alpha subunit family. Heterotrimer of UreA (gamma), UreB (beta) and UreC (alpha) subunits. Three heterotrimers associate to form the active enzyme. Ni cation is required as a cofactor. Post-translationally, carboxylation allows a single lysine to coordinate two nickel ions.

The protein localises to the cytoplasm. The enzyme catalyses urea + 2 H2O + H(+) = hydrogencarbonate + 2 NH4(+). The protein operates within nitrogen metabolism; urea degradation; CO(2) and NH(3) from urea (urease route): step 1/1. The sequence is that of Urease subunit alpha from Escherichia coli O157:H7.